The sequence spans 357 residues: Dual-specificity RNA methyltransferase RlmN (357 aa).

Glu89 functions as the Proton acceptor in the catalytic mechanism. In terms of domain architecture, Radical SAM core spans 109–340 (EGEKYTVCVS…CTIRESKALD (232 aa)). A disulfide bond links Cys116 and Cys345. The [4Fe-4S] cluster site is built by Cys123, Cys127, and Cys130. Residues 173 to 174 (GE), Ser203, 226 to 228 (SLH), and Asn302 contribute to the S-adenosyl-L-methionine site. Cys345 functions as the S-methylcysteine intermediate in the catalytic mechanism.

It belongs to the radical SAM superfamily. RlmN family. The cofactor is [4Fe-4S] cluster.

The protein localises to the cytoplasm. The catalysed reaction is adenosine(2503) in 23S rRNA + 2 reduced [2Fe-2S]-[ferredoxin] + 2 S-adenosyl-L-methionine = 2-methyladenosine(2503) in 23S rRNA + 5'-deoxyadenosine + L-methionine + 2 oxidized [2Fe-2S]-[ferredoxin] + S-adenosyl-L-homocysteine. It carries out the reaction adenosine(37) in tRNA + 2 reduced [2Fe-2S]-[ferredoxin] + 2 S-adenosyl-L-methionine = 2-methyladenosine(37) in tRNA + 5'-deoxyadenosine + L-methionine + 2 oxidized [2Fe-2S]-[ferredoxin] + S-adenosyl-L-homocysteine. Functionally, specifically methylates position 2 of adenine 2503 in 23S rRNA and position 2 of adenine 37 in tRNAs. m2A2503 modification seems to play a crucial role in the proofreading step occurring at the peptidyl transferase center and thus would serve to optimize ribosomal fidelity. The sequence is that of Dual-specificity RNA methyltransferase RlmN from Helicobacter pylori (strain G27).